Reading from the N-terminus, the 38-residue chain is Photosystem II reaction center protein L (38 aa).

A helical transmembrane segment spans residues 17-37 (SLYWGLLLIFVLAVLFSNYFF).

Belongs to the PsbL family. In terms of assembly, PSII is composed of 1 copy each of membrane proteins PsbA, PsbB, PsbC, PsbD, PsbE, PsbF, PsbH, PsbI, PsbJ, PsbK, PsbL, PsbM, PsbT, PsbX, PsbY, PsbZ, Psb30/Ycf12, at least 3 peripheral proteins of the oxygen-evolving complex and a large number of cofactors. It forms dimeric complexes.

The protein resides in the plastid. It is found in the chloroplast thylakoid membrane. Functionally, one of the components of the core complex of photosystem II (PSII). PSII is a light-driven water:plastoquinone oxidoreductase that uses light energy to abstract electrons from H(2)O, generating O(2) and a proton gradient subsequently used for ATP formation. It consists of a core antenna complex that captures photons, and an electron transfer chain that converts photonic excitation into a charge separation. This subunit is found at the monomer-monomer interface and is required for correct PSII assembly and/or dimerization. The protein is Photosystem II reaction center protein L of Ananas comosus (Pineapple).